The chain runs to 332 residues: Methionine synthase (332 aa).

Positions 211, 213, and 296 each coordinate Zn(2+).

This sequence belongs to the archaeal MetE family. Requires Zn(2+) as cofactor.

It functions in the pathway amino-acid biosynthesis; L-methionine biosynthesis via de novo pathway. Functionally, catalyzes the transfer of a methyl group to L-homocysteine resulting in methionine formation. The physiological methyl donor is unknown. The polypeptide is Methionine synthase (Saccharolobus islandicus (strain L.S.2.15 / Lassen #1) (Sulfolobus islandicus)).